A 335-amino-acid polypeptide reads, in one-letter code: Glycerol-3-phosphate dehydrogenase [NAD(P)+] (335 aa).

Residues S15, Y16, H36, and K110 each coordinate NADPH. Sn-glycerol 3-phosphate is bound by residues K110, G139, and T141. Residue A143 participates in NADPH binding. Residues K195, D248, S258, R259, and N260 each coordinate sn-glycerol 3-phosphate. The active-site Proton acceptor is K195. R259 serves as a coordination point for NADPH. V283 and E285 together coordinate NADPH.

The protein belongs to the NAD-dependent glycerol-3-phosphate dehydrogenase family.

The protein localises to the cytoplasm. The enzyme catalyses sn-glycerol 3-phosphate + NAD(+) = dihydroxyacetone phosphate + NADH + H(+). It carries out the reaction sn-glycerol 3-phosphate + NADP(+) = dihydroxyacetone phosphate + NADPH + H(+). The protein operates within membrane lipid metabolism; glycerophospholipid metabolism. Catalyzes the reduction of the glycolytic intermediate dihydroxyacetone phosphate (DHAP) to sn-glycerol 3-phosphate (G3P), the key precursor for phospholipid synthesis. This is Glycerol-3-phosphate dehydrogenase [NAD(P)+] from Mannheimia succiniciproducens (strain KCTC 0769BP / MBEL55E).